We begin with the raw amino-acid sequence, 255 residues long: tRNA (guanine-N(7)-)-methyltransferase (255 aa).

Residues 1–29 (MSDSDASRPSAIASDGPDAAGKHASGAPW) form a disordered region. The S-adenosyl-L-methionine site is built by E86, E111, D138, and D160. D160 is an active-site residue. Substrate-binding positions include K164, D196, and 233-236 (TRYE).

The protein belongs to the class I-like SAM-binding methyltransferase superfamily. TrmB family.

It carries out the reaction guanosine(46) in tRNA + S-adenosyl-L-methionine = N(7)-methylguanosine(46) in tRNA + S-adenosyl-L-homocysteine. The protein operates within tRNA modification; N(7)-methylguanine-tRNA biosynthesis. Functionally, catalyzes the formation of N(7)-methylguanine at position 46 (m7G46) in tRNA. The polypeptide is tRNA (guanine-N(7)-)-methyltransferase (Ruegeria sp. (strain TM1040) (Silicibacter sp.)).